Consider the following 1034-residue polypeptide: Isoleucine--tRNA ligase (1034 aa).

A 'HIGH' region motif is present at residues 48 to 58 (PTANGKPHIGH). Positions 588–592 (KMSKH) match the 'KMSKS' region motif. Residue Lys-591 participates in ATP binding.

The protein belongs to the class-I aminoacyl-tRNA synthetase family. IleS type 2 subfamily. In terms of assembly, monomer. Zn(2+) serves as cofactor.

The protein resides in the cytoplasm. The catalysed reaction is tRNA(Ile) + L-isoleucine + ATP = L-isoleucyl-tRNA(Ile) + AMP + diphosphate. In terms of biological role, catalyzes the attachment of isoleucine to tRNA(Ile). As IleRS can inadvertently accommodate and process structurally similar amino acids such as valine, to avoid such errors it has two additional distinct tRNA(Ile)-dependent editing activities. One activity is designated as 'pretransfer' editing and involves the hydrolysis of activated Val-AMP. The other activity is designated 'posttransfer' editing and involves deacylation of mischarged Val-tRNA(Ile). In Clostridium kluyveri (strain ATCC 8527 / DSM 555 / NBRC 12016 / NCIMB 10680 / K1), this protein is Isoleucine--tRNA ligase.